The chain runs to 444 residues: Glutamate-1-semialdehyde 2,1-aminomutase (444 aa).

Position 267 is an N6-(pyridoxal phosphate)lysine (Lys267).

This sequence belongs to the class-III pyridoxal-phosphate-dependent aminotransferase family. HemL subfamily. In terms of assembly, homodimer. It depends on pyridoxal 5'-phosphate as a cofactor.

It localises to the cytoplasm. The enzyme catalyses (S)-4-amino-5-oxopentanoate = 5-aminolevulinate. It functions in the pathway porphyrin-containing compound metabolism; protoporphyrin-IX biosynthesis; 5-aminolevulinate from L-glutamyl-tRNA(Glu): step 2/2. This is Glutamate-1-semialdehyde 2,1-aminomutase from Xylella fastidiosa (strain 9a5c).